The primary structure comprises 167 residues: Ribosome maturation factor RimM (167 aa).

The PRC barrel domain occupies 94–165 (ENEYYYSDII…KIIITPMEGL (72 aa)).

This sequence belongs to the RimM family. As to quaternary structure, binds ribosomal protein uS19.

It localises to the cytoplasm. In terms of biological role, an accessory protein needed during the final step in the assembly of 30S ribosomal subunit, possibly for assembly of the head region. Essential for efficient processing of 16S rRNA. May be needed both before and after RbfA during the maturation of 16S rRNA. It has affinity for free ribosomal 30S subunits but not for 70S ribosomes. This chain is Ribosome maturation factor RimM, found in Staphylococcus aureus (strain bovine RF122 / ET3-1).